The sequence spans 84 residues: Antitoxin VapB30 (84 aa).

Antitoxin component of a type II toxin-antitoxin (TA) system. Upon expression in M.smegmatis neutralizes the effect of cognate toxin VapC30. The protein is Antitoxin VapB30 (vapB30) of Mycobacterium tuberculosis (strain ATCC 25618 / H37Rv).